A 295-amino-acid chain; its full sequence is Bifunctional protein FolD (295 aa).

Residues 172–174 (GRS), S197, and I238 contribute to the NADP(+) site.

The protein belongs to the tetrahydrofolate dehydrogenase/cyclohydrolase family. In terms of assembly, homodimer.

It catalyses the reaction (6R)-5,10-methylene-5,6,7,8-tetrahydrofolate + NADP(+) = (6R)-5,10-methenyltetrahydrofolate + NADPH. The enzyme catalyses (6R)-5,10-methenyltetrahydrofolate + H2O = (6R)-10-formyltetrahydrofolate + H(+). The protein operates within one-carbon metabolism; tetrahydrofolate interconversion. Catalyzes the oxidation of 5,10-methylenetetrahydrofolate to 5,10-methenyltetrahydrofolate and then the hydrolysis of 5,10-methenyltetrahydrofolate to 10-formyltetrahydrofolate. The protein is Bifunctional protein FolD of Rickettsia akari (strain Hartford).